Reading from the N-terminus, the 167-residue chain is NADPH-dependent 7-cyano-7-deazaguanine reductase (167 aa).

Residues 1–24 (MTTRSQDQTRDLKVLGTGRLTSPE) are disordered. Catalysis depends on cysteine 57, which acts as the Thioimide intermediate. The active-site Proton donor is the aspartate 64. Substrate is bound by residues 79 to 81 (VES) and 98 to 99 (ME).

This sequence belongs to the GTP cyclohydrolase I family. QueF type 1 subfamily.

Its subcellular location is the cytoplasm. It catalyses the reaction 7-aminomethyl-7-carbaguanine + 2 NADP(+) = 7-cyano-7-deazaguanine + 2 NADPH + 3 H(+). It functions in the pathway tRNA modification; tRNA-queuosine biosynthesis. In terms of biological role, catalyzes the NADPH-dependent reduction of 7-cyano-7-deazaguanine (preQ0) to 7-aminomethyl-7-deazaguanine (preQ1). The chain is NADPH-dependent 7-cyano-7-deazaguanine reductase from Desulfovibrio desulfuricans (strain ATCC 27774 / DSM 6949 / MB).